The following is a 323-amino-acid chain: E3 ubiquitin-protein ligase SIRP1 (323 aa).

An RING-type; atypical zinc finger spans residues 199–240; sequence CSVCLDDLEVGSQAKQMPCEHKFHSSCILPWLELHSSCPVCR. 2 disordered regions span residues 248–280 and 296–323; these read TKDL…ESSN and REAQ…AGHS. The segment covering 259–269 has biased composition (basic and acidic residues); that stretch reads RVEDSHEEVRA.

It localises to the cytoplasm. It carries out the reaction S-ubiquitinyl-[E2 ubiquitin-conjugating enzyme]-L-cysteine + [acceptor protein]-L-lysine = [E2 ubiquitin-conjugating enzyme]-L-cysteine + N(6)-ubiquitinyl-[acceptor protein]-L-lysine.. It participates in protein modification; protein ubiquitination. In terms of biological role, possesses E3 ubiqutin-protein ligase activity in vitro. Acts as negative regulator of salinity stress tolerance mediated by the ubiquitin-proteasome degradation pathway. In Oryza sativa subsp. japonica (Rice), this protein is E3 ubiquitin-protein ligase SIRP1.